Here is a 425-residue protein sequence, read N- to C-terminus: Potassium/proton antiporter CemA (425 aa).

Residues 89 to 109 form a helical membrane-spanning segment; sequence LFLTTVKCLFILLFVPLGINF. Positions 159-278 are insert; sequence LSENQIFFGL…KTDFASVFRT (120 aa). A disordered region spans residues 173 to 192; sequence STFPSSEKSQKSEHFSNQDE. The span at 180 to 192 shows a compositional bias: basic and acidic residues; the sequence is KSQKSEHFSNQDE. Transmembrane regions (helical) follow at residues 300–320, 350–370, and 386–406; these read IEAI…CYLL, ILFI…ELFF, and IFLL…YLIF.

The protein belongs to the CemA family.

The protein resides in the plastid. The protein localises to the chloroplast inner membrane. The enzyme catalyses K(+)(in) + H(+)(out) = K(+)(out) + H(+)(in). Contributes to K(+)/H(+) antiport activity by supporting proton efflux to control proton extrusion and homeostasis in chloroplasts in a light-dependent manner to modulate photosynthesis. Prevents excessive induction of non-photochemical quenching (NPQ) under continuous-light conditions. Indirectly promotes efficient inorganic carbon uptake into chloroplasts. This chain is Potassium/proton antiporter CemA, found in Tetradesmus obliquus (Green alga).